The primary structure comprises 189 residues: Probable nicotinate-nucleotide adenylyltransferase (189 aa).

It belongs to the NadD family.

The catalysed reaction is nicotinate beta-D-ribonucleotide + ATP + H(+) = deamido-NAD(+) + diphosphate. It participates in cofactor biosynthesis; NAD(+) biosynthesis; deamido-NAD(+) from nicotinate D-ribonucleotide: step 1/1. Functionally, catalyzes the reversible adenylation of nicotinate mononucleotide (NaMN) to nicotinic acid adenine dinucleotide (NaAD). The protein is Probable nicotinate-nucleotide adenylyltransferase of Staphylococcus aureus (strain bovine RF122 / ET3-1).